We begin with the raw amino-acid sequence, 246 residues long: MTSLGVNIDHIANIRQARLANEPDPVQMALLAELGGADGITIHLREDRRHIQDRDLKLLRETIKSRLNLEMAATTEMIEIALDLKPDMITLVPERREEITTEGGLDVASNAKSLKEIVTKMESCCIPTSLFVDANSKQLEASSKIGATWVELHTGPYARASWKNQPLEFAKISEGVARARNLGLRVNAGHGLTYQNVEPIASITEMEELNIGHTIIARAIAIGLKEAVKEMKELIKNPRHEPFFGS.

Asn-7 is a 3-amino-2-oxopropyl phosphate binding site. Residue 9-10 coordinates 1-deoxy-D-xylulose 5-phosphate; that stretch reads DH. Arg-18 contributes to the 3-amino-2-oxopropyl phosphate binding site. The active-site Proton acceptor is His-43. 2 residues coordinate 1-deoxy-D-xylulose 5-phosphate: Arg-45 and His-50. Glu-70 acts as the Proton acceptor in catalysis. Thr-100 is a 1-deoxy-D-xylulose 5-phosphate binding site. The active-site Proton donor is the His-190. 3-amino-2-oxopropyl phosphate contacts are provided by residues Gly-191 and 212–213; that span reads GH.

Belongs to the PNP synthase family. In terms of assembly, homooctamer; tetramer of dimers.

Its subcellular location is the cytoplasm. The enzyme catalyses 3-amino-2-oxopropyl phosphate + 1-deoxy-D-xylulose 5-phosphate = pyridoxine 5'-phosphate + phosphate + 2 H2O + H(+). It participates in cofactor biosynthesis; pyridoxine 5'-phosphate biosynthesis; pyridoxine 5'-phosphate from D-erythrose 4-phosphate: step 5/5. Functionally, catalyzes the complicated ring closure reaction between the two acyclic compounds 1-deoxy-D-xylulose-5-phosphate (DXP) and 3-amino-2-oxopropyl phosphate (1-amino-acetone-3-phosphate or AAP) to form pyridoxine 5'-phosphate (PNP) and inorganic phosphate. This Prochlorococcus marinus (strain SARG / CCMP1375 / SS120) protein is Pyridoxine 5'-phosphate synthase.